We begin with the raw amino-acid sequence, 184 residues long: C-phycoerythrin class 1 subunit beta (184 aa).

Residues Cys50 and Cys61 each coordinate (2R,3E)-phycoerythrobilin. Position 72 is an N4-methylasparagine (Asn72). Residues Cys82 and Cys165 each coordinate (2R,3E)-phycoerythrobilin.

The protein belongs to the phycobiliprotein family. In terms of assembly, heterodimer of an alpha and a beta chain. In terms of processing, contains three covalently linked phycoerythrobilin chromophores.

Its subcellular location is the cellular thylakoid membrane. In terms of biological role, light-harvesting photosynthetic bile pigment-protein from the phycobiliprotein complex. The sequence is that of C-phycoerythrin class 1 subunit beta (cpeB) from Synechococcus sp. (strain WH8020).